Reading from the N-terminus, the 166-residue chain is Transcriptional repressor NrdR (166 aa).

The segment at 3–34 (CPHCHHNGSRVVDSRPTDDGRVIRRRRECESC) is a zinc-finger region. In terms of domain architecture, ATP-cone spans 49 to 139 (LLVIKKNGTR…VYRQFKDTGV (91 aa)).

It belongs to the NrdR family. It depends on Zn(2+) as a cofactor.

Negatively regulates transcription of bacterial ribonucleotide reductase nrd genes and operons by binding to NrdR-boxes. In Levilactobacillus brevis (strain ATCC 367 / BCRC 12310 / CIP 105137 / JCM 1170 / LMG 11437 / NCIMB 947 / NCTC 947) (Lactobacillus brevis), this protein is Transcriptional repressor NrdR.